Consider the following 322-residue polypeptide: Acetyl-coenzyme A carboxylase carboxyl transferase subunit alpha (322 aa).

A CoA carboxyltransferase C-terminal domain is found at 39–293 (RLQKKSQALT…RRALTDTLAE (255 aa)).

The protein belongs to the AccA family. As to quaternary structure, acetyl-CoA carboxylase is a heterohexamer composed of biotin carboxyl carrier protein (AccB), biotin carboxylase (AccC) and two subunits each of ACCase subunit alpha (AccA) and ACCase subunit beta (AccD).

The protein resides in the cytoplasm. The catalysed reaction is N(6)-carboxybiotinyl-L-lysyl-[protein] + acetyl-CoA = N(6)-biotinyl-L-lysyl-[protein] + malonyl-CoA. Its pathway is lipid metabolism; malonyl-CoA biosynthesis; malonyl-CoA from acetyl-CoA: step 1/1. Functionally, component of the acetyl coenzyme A carboxylase (ACC) complex. First, biotin carboxylase catalyzes the carboxylation of biotin on its carrier protein (BCCP) and then the CO(2) group is transferred by the carboxyltransferase to acetyl-CoA to form malonyl-CoA. This is Acetyl-coenzyme A carboxylase carboxyl transferase subunit alpha from Thiobacillus denitrificans (strain ATCC 25259 / T1).